Reading from the N-terminus, the 1036-residue chain is Lethal(2) giant larvae protein homolog 1 (1036 aa).

WD repeat units follow at residues 38–71 (SALA…FTGL), 78–119 (VTQM…GLSF), 139–175 (VTVV…GQTL), 199–233 (SLQG…EHVF), 239–271 (LESL…GSPP), 289–331 (AINK…ETLV), 339–373 (VIDF…VLDL), 395–473 (TCSA…YKLS), 517–592 (QKVA…RMLI), and 601–662 (TAVT…LRQS). Residue S662 is modified to Phosphoserine. The span at 667–677 (RKSRVSGKKRT) shows a compositional bias: basic residues. The disordered stretch occupies residues 667 to 688 (RKSRVSGKKRTPAASSKLQEAN). The segment covering 679 to 688 (AASSKLQEAN) has biased composition (polar residues). WD repeat units lie at residues 722 to 782 (VRCL…KEVQ), 791 to 843 (AIAV…VSAK), 848 to 901 (LTAH…VHYS), and 915 to 938 (VFTR…SLSA). Phosphothreonine is present on T957. Residues S964, S982, and S989 each carry the phosphoserine modification. The interval 980 to 1002 (PESCEGSPSSAHSKRADTMEPPE) is disordered.

It belongs to the WD repeat L(2)GL family. In terms of assembly, associated with nonmuscle myosin II heavy chain. Interacts with PRKCI/aPKC, PARD6B/Par-6 and PARD6A. Interacts with STX4A. Interacts with RAB10 (GDP-bound form); the interaction is direct and promotes RAB10 association with membranes and activation through competition with the Rab inhibitor GDI1. Interacts with DCAF1. In terms of processing, phosphorylated by PRKCI. In terms of tissue distribution, widely expressed. Expressed in brain, ovary, testis, with moderate expression in lever, uterus, lung and kidney.

Its subcellular location is the early endosome membrane. The protein localises to the golgi apparatus. It localises to the trans-Golgi network membrane. It is found in the cell projection. The protein resides in the axon. Its subcellular location is the golgi apparatus membrane. The protein localises to the cytoplasm. It localises to the cytoskeleton. Its function is as follows. Cortical cytoskeleton protein found in a complex involved in maintaining cell polarity and epithelial integrity. Involved in the regulation of mitotic spindle orientation, proliferation, differentiation and tissue organization of neuroepithelial cells. Involved in axonogenesis through RAB10 activation thereby regulating vesicular membrane trafficking toward the axonal plasma membrane. This Bos taurus (Bovine) protein is Lethal(2) giant larvae protein homolog 1 (LLGL1).